Reading from the N-terminus, the 317-residue chain is Tyrosine--tRNA ligase (317 aa).

Tyr33 serves as a coordination point for L-tyrosine. The 'HIGH' region signature appears at Pro38–His46. L-tyrosine contacts are provided by Tyr155, Gln159, Asp162, and Gln177. Positions Lys211–Ser215 match the 'KMSKS' region motif. An ATP-binding site is contributed by Ser214.

It belongs to the class-I aminoacyl-tRNA synthetase family. TyrS type 3 subfamily. As to quaternary structure, homodimer.

Its subcellular location is the cytoplasm. The catalysed reaction is tRNA(Tyr) + L-tyrosine + ATP = L-tyrosyl-tRNA(Tyr) + AMP + diphosphate + H(+). Functionally, catalyzes the attachment of tyrosine to tRNA(Tyr) in a two-step reaction: tyrosine is first activated by ATP to form Tyr-AMP and then transferred to the acceptor end of tRNA(Tyr). The sequence is that of Tyrosine--tRNA ligase from Methanosarcina acetivorans (strain ATCC 35395 / DSM 2834 / JCM 12185 / C2A).